We begin with the raw amino-acid sequence, 480 residues long: Glutamate--tRNA ligase 2 (480 aa).

Residues 15–25 (PSPTGYLHVGG) carry the 'HIGH' region motif. Residues 248–252 (RLSKR) carry the 'KMSKS' region motif. K251 provides a ligand contact to ATP.

The protein belongs to the class-I aminoacyl-tRNA synthetase family. Glutamate--tRNA ligase type 1 subfamily. Monomer.

It localises to the cytoplasm. The catalysed reaction is tRNA(Glu) + L-glutamate + ATP = L-glutamyl-tRNA(Glu) + AMP + diphosphate. Its function is as follows. Catalyzes the attachment of glutamate to tRNA(Glu) in a two-step reaction: glutamate is first activated by ATP to form Glu-AMP and then transferred to the acceptor end of tRNA(Glu). The sequence is that of Glutamate--tRNA ligase 2 from Koribacter versatilis (strain Ellin345).